A 191-amino-acid chain; its full sequence is MKTLLRASLVLFLSLTLLTGVAYPLLVTGLGQVLFPAQAAGSLLFRDGRPIGSSLIGQPFGAARYIWGRPSATAPTPNNAQASGGSNLGPSNPVLLQAVEARIAALRAADPGNTLPIPVDLVTASASGLDPEISLAGARYQAARVARARGLSEAEVLALIDQHARGRWFGFLGEPRVNVLALNLTLDGRRP.

Residues 7-27 (ASLVLFLSLTLLTGVAYPLLV) form a helical membrane-spanning segment.

Belongs to the KdpC family. In terms of assembly, the system is composed of three essential subunits: KdpA, KdpB and KdpC.

The protein resides in the cell inner membrane. In terms of biological role, part of the high-affinity ATP-driven potassium transport (or Kdp) system, which catalyzes the hydrolysis of ATP coupled with the electrogenic transport of potassium into the cytoplasm. This subunit acts as a catalytic chaperone that increases the ATP-binding affinity of the ATP-hydrolyzing subunit KdpB by the formation of a transient KdpB/KdpC/ATP ternary complex. This chain is Potassium-transporting ATPase KdpC subunit, found in Methylibium petroleiphilum (strain ATCC BAA-1232 / LMG 22953 / PM1).